Consider the following 181-residue polypeptide: Transcription factor bHLH167 (181 aa).

Residues Met-1–Arg-22 form a disordered region. In terms of domain architecture, bHLH spans Ser-14 to Leu-63.

This sequence belongs to the bHLH protein family.

It is found in the nucleus. This is Transcription factor bHLH167 from Arabidopsis thaliana (Mouse-ear cress).